The primary structure comprises 75 residues: Small capsomere-interacting protein (75 aa).

Belongs to the herpesviridae small capsomere-interacting protein family. As to quaternary structure, interacts with the major capsid protein/MCP.

It is found in the virion. It localises to the host nucleus. Its function is as follows. Participates in the assembly of the infectious particles by decorating the outer surface of the capsid shell and thus forming a layer between the capsid and the tegument. Complexes composed of the major capsid protein and small capsomere-interacting protein/SCP assemble together in the host cytoplasm and are translocated to the nucleus, where they accumulate and participate in capsid assembly. The sequence is that of Small capsomere-interacting protein from Homo sapiens (Human).